A 463-amino-acid polypeptide reads, in one-letter code: L-seryl-tRNA(Sec) selenium transferase (463 aa).

Lysine 295 is modified (N6-(pyridoxal phosphate)lysine).

It belongs to the SelA family. As to quaternary structure, homodecamer; pentamer of dimers. Binds only one seryl-tRNA(Sec) per dimer. The cofactor is pyridoxal 5'-phosphate.

It is found in the cytoplasm. It carries out the reaction L-seryl-tRNA(Sec) + selenophosphate + H(+) = L-selenocysteinyl-tRNA(Sec) + phosphate. The protein operates within aminoacyl-tRNA biosynthesis; selenocysteinyl-tRNA(Sec) biosynthesis; selenocysteinyl-tRNA(Sec) from L-seryl-tRNA(Sec) (bacterial route): step 1/1. In terms of biological role, converts seryl-tRNA(Sec) to selenocysteinyl-tRNA(Sec) required for selenoprotein biosynthesis. The chain is L-seryl-tRNA(Sec) selenium transferase from Salmonella schwarzengrund (strain CVM19633).